Here is a 238-residue protein sequence, read N- to C-terminus: Ribonuclease PH (238 aa).

Residues R86 and 124-126 (GTR) each bind phosphate.

The protein belongs to the RNase PH family. In terms of assembly, homohexameric ring arranged as a trimer of dimers.

The catalysed reaction is tRNA(n+1) + phosphate = tRNA(n) + a ribonucleoside 5'-diphosphate. Its function is as follows. Phosphorolytic 3'-5' exoribonuclease that plays an important role in tRNA 3'-end maturation. Removes nucleotide residues following the 3'-CCA terminus of tRNAs; can also add nucleotides to the ends of RNA molecules by using nucleoside diphosphates as substrates, but this may not be physiologically important. Probably plays a role in initiation of 16S rRNA degradation (leading to ribosome degradation) during starvation. This Cupriavidus metallidurans (strain ATCC 43123 / DSM 2839 / NBRC 102507 / CH34) (Ralstonia metallidurans) protein is Ribonuclease PH.